The chain runs to 439 residues: Elongation factor Tu, mitochondrial (439 aa).

One can recognise a tr-type G domain in the interval 51–246 (KPHVNIGTIG…AVDSYITLPE (196 aa)). The G1 stretch occupies residues 60–67 (GHVDHGKT). Residue 60-67 (GHVDHGKT) participates in GTP binding. The interval 101-105 (GITIS) is G2. A G3 region spans residues 122–125 (DCPG). Residues 122–126 (DCPGH) and 177–180 (NKVD) each bind GTP. The tract at residues 177 to 180 (NKVD) is G4. The G5 stretch occupies residues 214-216 (SAL).

The protein belongs to the TRAFAC class translation factor GTPase superfamily. Classic translation factor GTPase family. EF-Tu/EF-1A subfamily.

It is found in the mitochondrion. In terms of biological role, this protein promotes the GTP-dependent binding of aminoacyl-tRNA to the A-site of ribosomes during protein biosynthesis. The protein is Elongation factor Tu, mitochondrial (tuf1) of Schizosaccharomyces pombe (strain 972 / ATCC 24843) (Fission yeast).